The chain runs to 55 residues: Spermatid nuclear transition protein 1 (55 aa).

The segment covering 1-42 has biased composition (basic residues); it reads MSTSRKLKSQGTRRGKNRTPHKGVKRGCSKRKYRKSSLKSRK. Positions 1–55 are disordered; the sequence is MSTSRKLKSQGTRRGKNRTPHKGVKRGCSKRKYRKSSLKSRKRCDDANRNFRSHL. Phosphoserine occurs at positions 9, 36, 37, and 40.

This sequence belongs to the nuclear transition protein 1 family. Testis.

Its subcellular location is the nucleus. It is found in the chromosome. In terms of biological role, plays a key role in the replacement of histones to protamine in the elongating spermatids of mammals. In condensing spermatids, loaded onto the nucleosomes, where it promotes the recruitment and processing of protamines, which are responsible for histone eviction. The sequence is that of Spermatid nuclear transition protein 1 (TNP1) from Ovis aries (Sheep).